A 401-amino-acid chain; its full sequence is Coenzyme A biosynthesis bifunctional protein CoaBC (401 aa).

The segment at 1–190 is phosphopantothenoylcysteine decarboxylase; it reads MQTLAGKKIL…FQPKPLQDKS (190 aa). The active-site Proton donor is the Cys159. Residues 191 to 401 form a phosphopantothenate--cysteine ligase region; it reads ILITAGPTRE…LKQIQTLMGH (211 aa). CTP contacts are provided by residues Asp279, Lys289, 307-310, Phe326, Lys340, and Lys344; that span reads PDIV.

The protein in the N-terminal section; belongs to the HFCD (homo-oligomeric flavin containing Cys decarboxylase) superfamily. It in the C-terminal section; belongs to the PPC synthetase family. Requires Mg(2+) as cofactor. It depends on FMN as a cofactor.

It catalyses the reaction N-[(R)-4-phosphopantothenoyl]-L-cysteine + H(+) = (R)-4'-phosphopantetheine + CO2. The enzyme catalyses (R)-4'-phosphopantothenate + L-cysteine + CTP = N-[(R)-4-phosphopantothenoyl]-L-cysteine + CMP + diphosphate + H(+). It participates in cofactor biosynthesis; coenzyme A biosynthesis; CoA from (R)-pantothenate: step 2/5. It functions in the pathway cofactor biosynthesis; coenzyme A biosynthesis; CoA from (R)-pantothenate: step 3/5. Functionally, catalyzes two sequential steps in the biosynthesis of coenzyme A. In the first step cysteine is conjugated to 4'-phosphopantothenate to form 4-phosphopantothenoylcysteine. In the second step the latter compound is decarboxylated to form 4'-phosphopantotheine. This chain is Coenzyme A biosynthesis bifunctional protein CoaBC, found in Vibrio vulnificus (strain YJ016).